We begin with the raw amino-acid sequence, 307 residues long: OTU domain-containing protein 2 (307 aa).

2 disordered regions span residues 23–46 (ENKDLQNKITGMKKQATKSKRKEV) and 96–130 (SRDEKEQQNVPVQQQQQGQTKKRRNRQKERLAKRD). Residues 103 to 114 (QNVPVQQQQQGQ) are compositionally biased toward low complexity. Residues 167 to 307 (LKQFDIQPDG…GEHYNSLHDS (141 aa)) form the OTU domain.

This chain is OTU domain-containing protein 2 (OTU2), found in Saccharomyces cerevisiae (strain ATCC 204508 / S288c) (Baker's yeast).